A 480-amino-acid chain; its full sequence is Iroquois-class homeodomain protein IRX-1 (480 aa).

Residues 127 to 189 (DPGRPKNATR…NARRRLKKEN (63 aa)) constitute a DNA-binding region (homeobox; TALE-type). 3 disordered regions span residues 190–285 (KVTW…LGLV), 318–354 (SLAETATSPDGAPKASPPPPSSHASAHGPPSGSPLQH), and 401–480 (PHGP…LPSA). Positions 210 to 232 (TEGDPEKAEDDEEIDLESIDIDQ) are enriched in acidic residues. Serine 241 carries the post-translational modification Phosphoserine. Residues 254-263 (ARVAPPASAR) are compositionally biased toward low complexity. Polar residues predominate over residues 264-280 (DQSSPLSAAETLKSQDS). The span at 339–351 (SHASAHGPPSGSP) shows a compositional bias: low complexity.

The protein belongs to the TALE/IRO homeobox family. In terms of tissue distribution, expressed in specific and overlapping patterns with Irx1 and Irx2 in the developing and adult metanephric kidney. In the adult metanephros, renal expression is found in the loop of Henle in the S3 proximal tubule segment and in the thick ascending limb (TAL) of the distal tubule.

It localises to the nucleus. In Mus musculus (Mouse), this protein is Iroquois-class homeodomain protein IRX-1 (Irx1).